Reading from the N-terminus, the 227-residue chain is MAYPFQLGLQDATSPIMEELLHFHDHTLMIVFLISSLVLYIISLMLTTKLTHTSTMDAQEVETVWTILPAIILILIALPSLRILYMMDEINNPSLTVKTMGHQWYWSYEYTDYEDLNFDSYMIPTQELKPGELRLLEVDNRVVLPMEMTIRMLVSSEDVLHSWAVPSLGLKTDAIPGRLNQTTLMAMRPGLYYGQCSEICGSNHSFMPIVLEMVPLSYFETWSALMV.

Residues 1 to 14 lie on the Mitochondrial intermembrane side of the membrane; the sequence is MAYPFQLGLQDATS. Residues 15 to 45 form a helical membrane-spanning segment; it reads PIMEELLHFHDHTLMIVFLISSLVLYIISLM. Topologically, residues 46–59 are mitochondrial matrix; it reads LTTKLTHTSTMDAQ. Residues 60–87 form a helical membrane-spanning segment; that stretch reads EVETVWTILPAIILILIALPSLRILYMM. The Mitochondrial intermembrane segment spans residues 88-227; it reads DEINNPSLTV…YFETWSALMV (140 aa). Cu cation contacts are provided by His-161, Cys-196, Glu-198, Cys-200, His-204, and Met-207. Glu-198 contributes to the Mg(2+) binding site. Residue Tyr-218 is modified to Phosphotyrosine.

It belongs to the cytochrome c oxidase subunit 2 family. As to quaternary structure, component of the cytochrome c oxidase (complex IV, CIV), a multisubunit enzyme composed of 14 subunits. The complex is composed of a catalytic core of 3 subunits MT-CO1, MT-CO2 and MT-CO3, encoded in the mitochondrial DNA, and 11 supernumerary subunits COX4I, COX5A, COX5B, COX6A, COX6B, COX6C, COX7A, COX7B, COX7C, COX8 and NDUFA4, which are encoded in the nuclear genome. The complex exists as a monomer or a dimer and forms supercomplexes (SCs) in the inner mitochondrial membrane with NADH-ubiquinone oxidoreductase (complex I, CI) and ubiquinol-cytochrome c oxidoreductase (cytochrome b-c1 complex, complex III, CIII), resulting in different assemblies (supercomplex SCI(1)III(2)IV(1) and megacomplex MCI(2)III(2)IV(2)). Found in a complex with TMEM177, COA6, COX18, COX20, SCO1 and SCO2. Interacts with TMEM177 in a COX20-dependent manner. Interacts with COX20. Interacts with COX16. It depends on Cu cation as a cofactor.

It localises to the mitochondrion inner membrane. It catalyses the reaction 4 Fe(II)-[cytochrome c] + O2 + 8 H(+)(in) = 4 Fe(III)-[cytochrome c] + 2 H2O + 4 H(+)(out). Functionally, component of the cytochrome c oxidase, the last enzyme in the mitochondrial electron transport chain which drives oxidative phosphorylation. The respiratory chain contains 3 multisubunit complexes succinate dehydrogenase (complex II, CII), ubiquinol-cytochrome c oxidoreductase (cytochrome b-c1 complex, complex III, CIII) and cytochrome c oxidase (complex IV, CIV), that cooperate to transfer electrons derived from NADH and succinate to molecular oxygen, creating an electrochemical gradient over the inner membrane that drives transmembrane transport and the ATP synthase. Cytochrome c oxidase is the component of the respiratory chain that catalyzes the reduction of oxygen to water. Electrons originating from reduced cytochrome c in the intermembrane space (IMS) are transferred via the dinuclear copper A center (CU(A)) of subunit 2 and heme A of subunit 1 to the active site in subunit 1, a binuclear center (BNC) formed by heme A3 and copper B (CU(B)). The BNC reduces molecular oxygen to 2 water molecules using 4 electrons from cytochrome c in the IMS and 4 protons from the mitochondrial matrix. The protein is Cytochrome c oxidase subunit 2 (MT-CO2) of Canis adustus (Side-striped jackal).